The sequence spans 467 residues: ATP synthase subunit beta (467 aa).

150 to 157 is an ATP binding site; the sequence is GGAGVGKT.

It belongs to the ATPase alpha/beta chains family. As to quaternary structure, F-type ATPases have 2 components, CF(1) - the catalytic core - and CF(0) - the membrane proton channel. CF(1) has five subunits: alpha(3), beta(3), gamma(1), delta(1), epsilon(1). CF(0) has three main subunits: a(1), b(2) and c(9-12). The alpha and beta chains form an alternating ring which encloses part of the gamma chain. CF(1) is attached to CF(0) by a central stalk formed by the gamma and epsilon chains, while a peripheral stalk is formed by the delta and b chains.

Its subcellular location is the cell inner membrane. It carries out the reaction ATP + H2O + 4 H(+)(in) = ADP + phosphate + 5 H(+)(out). Produces ATP from ADP in the presence of a proton gradient across the membrane. The catalytic sites are hosted primarily by the beta subunits. The chain is ATP synthase subunit beta from Vibrio cholerae serotype O1 (strain ATCC 39541 / Classical Ogawa 395 / O395).